Here is an 84-residue protein sequence, read N- to C-terminus: uncharacterized protein (84 aa).

Residues 7-23 traverse the membrane as a helical segment; the sequence is AFSGVIALYGGYLYLRL.

The protein localises to the membrane. This is an uncharacterized protein from Haemophilus influenzae (strain ATCC 51907 / DSM 11121 / KW20 / Rd).